The following is a 591-amino-acid chain: ATPase family AAA domain-containing protein 3A (591 aa).

The interval 1–52 is disordered; that stretch reads MSWLFGIKGPKGEGTGPPLPLPPAQPGAEGGGDRGAGDRPSPKDKWSNFDPT. The residue at position 2 (Ser2) is an N-acetylserine. The required for interaction with the inner surface of the mitochondrial outer membrane stretch occupies residues 2 to 49; sequence SWLFGIKGPKGEGTGPPLPLPPAQPGAEGGGDRGAGDRPSPKDKWSNF. Residues 2–245 are Mitochondrial intermembrane-facing; that stretch reads SWLFGIKGPK…FRAFVTDWDK (244 aa). A compositionally biased stretch (basic and acidic residues) spans 31-47; that stretch reads GGDRGAGDRPSPKDKWS. A coiled-coil region spans residues 55–216; it reads ERAAKAAREL…REQIRLKAAE (162 aa). A helical membrane pass occupies residues 246–263; it reads VTATVAGLTLLAVGVYSA. Residues 264–586 lie on the Mitochondrial matrix side of the membrane; sequence KNATSVAGRY…DSQTNKPPHP (323 aa). The interval 289–304 is S100B-binding; the sequence is RISVLEALRHPIQVSR. 351–358 serves as a coordination point for ATP; the sequence is GPPGTGKT. The residue at position 490 (Lys490) is an N6-acetyllysine; alternate. An N6-succinyllysine; alternate modification is found at Lys490. 2 positions are modified to N6-acetyllysine: Lys494 and Lys512. The disordered stretch occupies residues 572-591; that stretch reads KVERPDSQTNKPPHPSLLSC.

This sequence belongs to the AAA ATPase family. As to quaternary structure, can form homooligomers. Homodimer formation at the N-terminus may be regulated by ATP and is required for the interaction with the inner surface of the mitochondrial outer membrane and correct mitochondrial homeostasis. Interacts with components of the mitochondrial ribosome and with other proteins involved in mitochondrial RNA metabolism. May also interact with protein involved in lipid metabolism, including STARD9. May interact with FAM210A. Interacts with GADD45GIP1. Interacts with S100B in a Ca(+2)- and Zn(+2)-dependent manner; this interaction probably occurs in the cytosol prior to mitochondrial targeting. S100B could assist ATAD3A cytoplasmic processing, preventing aggregation and favoring mitochondrial localization. Interacts with HSP60/HSPD1. Interacts with CLPB. Interacts with EIF2AK3/PERK; ATAD3A and EIF2S1/eIF-2-alpha occupy a common binding site within the cytoplasmic loop of EIF2AK3/PERK, leading to prevent EIF2AK3/PERK association with its substrate EIF2S1/eIF-2-alpha. As to expression, expressed in heart, spleen, kidney, liver and at smaller levels, in lung and muscle (at protein level).

The protein localises to the mitochondrion inner membrane. The protein resides in the mitochondrion matrix. It is found in the mitochondrion nucleoid. The enzyme catalyses ATP + H2O = ADP + phosphate + H(+). Essential for mitochondrial network organization, mitochondrial metabolism and cell growth at organism and cellular level. May play an important role in mitochondrial protein synthesis. May also participate in mitochondrial DNA replication. May bind to mitochondrial DNA D-loops and contribute to nucleoid stability. Required for enhanced channeling of cholesterol for hormone-dependent steroidogenesis. Involved in mitochondrial-mediated antiviral innate immunity. Required to protect mitochondria from the PERK-mediated unfolded protein response: specifically inhibits the activity of EIF2AK3/PERK at mitochondria-endoplasmic reticulum contact sites, thereby providing a safe haven for mitochondrial protein translation during endoplasmic reticulum stress. Ability to inhibit EIF2AK3/PERK is independent of its ATPase activity. Also involved in the mitochondrial DNA damage response by promoting signaling between damaged genomes and the mitochondrial membrane, leading to activation of the integrated stress response (ISR). This chain is ATPase family AAA domain-containing protein 3A (Atad3a), found in Mus musculus (Mouse).